A 147-amino-acid chain; its full sequence is Large ribosomal subunit protein uL13 (147 aa).

The protein belongs to the universal ribosomal protein uL13 family. As to quaternary structure, part of the 50S ribosomal subunit.

In terms of biological role, this protein is one of the early assembly proteins of the 50S ribosomal subunit, although it is not seen to bind rRNA by itself. It is important during the early stages of 50S assembly. The sequence is that of Large ribosomal subunit protein uL13 from Pediococcus pentosaceus (strain ATCC 25745 / CCUG 21536 / LMG 10740 / 183-1w).